Consider the following 536-residue polypeptide: Mannuronan C5-epimerase (536 aa).

The first 36 residues, 1-36, serve as a signal peptide directing secretion; sequence MNSHASNGRSRNWPHALLESALLTSALLMASSVALA. PbH1 repeat units lie at residues 298–320, 322–345, 347–369, 371–393, and 394–416; these read TRDF…DPHD, SHGL…IISR, VDNS…VLDR, SVGN…TLYE, and SGNN…RVRN. H319 acts as the Proton acceptor in catalysis.

This sequence belongs to the D-mannuronate C5-epimerase family.

The protein resides in the periplasm. The catalysed reaction is [(1-&gt;4)-beta-D-mannuronosyl](n) = [alginate](n). It functions in the pathway glycan biosynthesis; alginate biosynthesis. Catalyzes the epimerization of beta-D-mannuronate to alpha-L-guluronate during the synthesis of the linear polysaccharide alginate. In addition, is part of a periplasmic protein complex that protects alginate from degradation by AlgL by channeling the newly formed alginate polymer through a scaffold that transfers the alginate polymer through the periplasmic space to the outer membrane secretin AlgE. This chain is Mannuronan C5-epimerase (algG), found in Pseudomonas syringae pv. tomato (strain ATCC BAA-871 / DC3000).